The chain runs to 122 residues: Large ribosomal subunit protein uL14 (122 aa).

This sequence belongs to the universal ribosomal protein uL14 family. In terms of assembly, part of the 50S ribosomal subunit. Forms a cluster with proteins L3 and L19. In the 70S ribosome, L14 and L19 interact and together make contacts with the 16S rRNA in bridges B5 and B8.

Its function is as follows. Binds to 23S rRNA. Forms part of two intersubunit bridges in the 70S ribosome. This Acidothermus cellulolyticus (strain ATCC 43068 / DSM 8971 / 11B) protein is Large ribosomal subunit protein uL14.